The primary structure comprises 283 residues: MDILLALLPAIAWGNILLVSVKMGGGAYSQTVGMTIGALFFATIMYVFTQPALTMTILIVGFISGLFWALGQVNQLKTVEKLGVSTTVTISTGMQLVATSIFGVIAFREWTTTTTIILGTIAILLIVVGVVFTSLDDKENAQPPGQLKKGLLTLIVSTFGYLVYVIIIRWYNIDGWSAILPQAVGMFVGAVVLTSKHKPFNKYAIRNALSGLLWGTGNLFLLLSLPRVGVATSFPLSQTGIVISTFGAIVFLGEKKTKRQLIFIALGSVLIIGGAVLLGMTKA.

The next 10 membrane-spanning stretches (helical) occupy residues 4-21 (LLAL…LVSV), 26-48 (GAYS…MYVF), 52-71 (ALTM…WALG), 84-106 (VSTT…GVIA), 110-132 (WTTT…GVVF), 151-173 (LLTL…WYNI), 178-195 (AILP…VLTS), 208-230 (ALSG…RVGV), 234-253 (FPLS…VFLG), and 260-279 (QLIF…VLLG).

Belongs to the GRP transporter (TC 2.A.7.5) family.

The protein localises to the cell membrane. This chain is Putative sugar uptake protein BC_0219, found in Bacillus cereus (strain ATCC 14579 / DSM 31 / CCUG 7414 / JCM 2152 / NBRC 15305 / NCIMB 9373 / NCTC 2599 / NRRL B-3711).